Reading from the N-terminus, the 524-residue chain is Peptide chain release factor 3 (524 aa).

The 268-residue stretch at 11 to 278 folds into the tr-type G domain; it reads AKRRTFAIIS…SFVQYAPEPG (268 aa). GTP is bound by residues 20–27, 88–92, and 142–145; these read SHPDAGKT, DTPGH, and NKLD.

Belongs to the TRAFAC class translation factor GTPase superfamily. Classic translation factor GTPase family. PrfC subfamily.

Its subcellular location is the cytoplasm. Its function is as follows. Increases the formation of ribosomal termination complexes and stimulates activities of RF-1 and RF-2. It binds guanine nucleotides and has strong preference for UGA stop codons. It may interact directly with the ribosome. The stimulation of RF-1 and RF-2 is significantly reduced by GTP and GDP, but not by GMP. This Lacticaseibacillus paracasei (strain ATCC 334 / BCRC 17002 / CCUG 31169 / CIP 107868 / KCTC 3260 / NRRL B-441) (Lactobacillus paracasei) protein is Peptide chain release factor 3.